A 611-amino-acid polypeptide reads, in one-letter code: Pyrichalasin H cluster regulator pyiR (611 aa).

The zn(2)-C6 fungal-type DNA-binding region spans 11–47; sequence CDRCRGHKLRCIRLDPGPNDTGALLPCKRCVKAGAEC. Disordered stretches follow at residues 53-128, 169-192, 265-291, 401-427, 521-550, and 564-593; these read LSVK…LPPW, ALAAPPGSERSPHRTSRAPSDGTT, GGAGSQSLRDQQMQQHQRHGSASGRSS, AHEGSSTENSAHRRGRGASPTADAAPQ, RGGLGGSSRDESSTEGGDGGGAGSSASDER, and SWFTTTTRGGSGGSGPGEGTGDSNGGRTVE. A compositionally biased stretch (basic and acidic residues) spans 59–69; the sequence is GDGHHSAHRAT. Residues 98 to 109 are compositionally biased toward low complexity; it reads PTQPAPQRQTQR. A compositionally biased stretch (polar residues) spans 265–279; the sequence is GGAGSQSLRDQQMQQ. Residues 572 to 587 show a composition bias toward gly residues; it reads GGSGGSGPGEGTGDSN.

Its subcellular location is the nucleus. Functionally, transcription factor that specifically regulates the expression of the gene cluster that mediates the biosynthesis of the mycotoxin pyrichalasin H, a tyrosine-derived cytochalasan that inhibits the growth of rice seedlings, but also inhibits lymphocyte capping and actin polymerization and alters cell morphology. Pyrichalasin H is indicated as the responsible agent for the genus-specific pathogenicity of M.grisea toward crabgrass. The polypeptide is Pyrichalasin H cluster regulator pyiR (Pyricularia grisea (Crabgrass-specific blast fungus)).